The primary structure comprises 1176 residues: Myosin light chain kinase, smooth muscle (1176 aa).

The interval 1 to 41 (MDFRANLQRQVKPKTLSEEERKVHGPQQVDFRSVLAKKGTP) is actin-binding (calcium/calmodulin-sensitive). Residues 1 to 354 (MDFRANLQRQ…SEKRPESRGT (354 aa)) are disordered. The interval 26–41 (PQQVDFRSVLAKKGTP) is calmodulin-binding. Pro residues predominate over residues 43-55 (TPVPEKVPPPKPA). 16 repeat units span residues 100–111 (FLKPVGNAKLAD), 112–123 (TPKPLSSTKPAE), 124–135 (TPKPLGNVKPAE), 136–147 (TPKPLGSTKPAE), 148–159 (TPKPLGSTKPAE), 160–171 (TPKPLGNVKPAE), 172–183 (TPKPLGNIKPTE), 184–195 (TPKPLGSTKPAE), 196–207 (TPKPLGSTKPAE), 208–219 (TPKPLGNVKPAE), 220–231 (TPKPLGNVKPAE), 232–243 (TPKPLGNVKPAE), 244–255 (TPKPVSNAKPAE), 256–267 (TLKPVGNAKPAE), 268–279 (TPKPLSNVKPAE), and 280–291 (TPKLVGNAKPAE). Residues 100–291 (FLKPVGNAKL…KLVGNAKPAE (192 aa)) are 16 X 12 AA tandem repeats. A Phosphoserine modification is found at Ser202. Residues 319–721 (PTGKEELKKE…TVTVNTEQKV (403 aa)) form an actin-binding (calcium/calmodulin-insensitive) region. Positions 320-335 (TGKEELKKEIKNDVNC) are enriched in basic and acidic residues. The region spanning 356–444 (PTFEEKLQDL…GQAESSCQVT (89 aa)) is the Ig-like C2-type 1 domain. A disulfide bridge connects residues Cys377 and Cys428. The disordered stretch occupies residues 448–497 (PDAPTSENAKAPEMKARRPKSSLPPVLGTESDATVKKKPAPKTPPKAAMP). In terms of domain architecture, Ig-like C2-type 2 spans 498–586 (PQIIQFPEDQ…GSRQAQVNLT (89 aa)). Positions 594–686 (PAGTPCASDI…QESELTALGE (93 aa)) constitute a Fibronectin type-III domain. Residues 673 to 707 (SEPSQESELTALGEKPEEEPKDEVEVSDDDEKEPE) form a disordered region. Acidic residues predominate over residues 688-706 (PEEEPKDEVEVSDDDEKEP). Residue Ser699 is modified to Phosphoserine. A Phosphotyrosine; by ABL1 modification is found at Tyr710. Residues 725-980 (YDIEERLGSG…CTQCLQHPWL (256 aa)) enclose the Protein kinase domain. Residues 731-739 (LGSGKFGQV) and Lys754 each bind ATP. Tyr836 is subject to Phosphotyrosine; by ABL1. The active-site Proton acceptor is Asp846. Phosphotyrosine; by ABL1 is present on Tyr896. Residues 972 to 1035 (TQCLQHPWLM…SGLSGRKSST (64 aa)) are calmodulin-binding. Ser1020, Ser1021, Ser1033, Ser1034, and Ser1037 each carry phosphoserine. Residue Thr1039 is modified to Phosphothreonine. Ser1040 carries the post-translational modification Phosphoserine. The Ig-like C2-type 3 domain maps to 1069-1158 (PYFSKTIRDL…GEATCTAELI (90 aa)). The cysteines at positions 1090 and 1142 are disulfide-linked.

This sequence belongs to the protein kinase superfamily. CAMK Ser/Thr protein kinase family. All isoforms including Telokin bind calmodulin. Interacts with SVIL. Interacts with CTTN; this interaction is reduced during thrombin-induced endothelial cell (EC) contraction but is promoted by the barrier-protective agonist sphingosine 1-phosphate (S1P) within lamellipodia. A complex made of ABL1, CTTN and MYLK regulates cortical actin-based cytoskeletal rearrangement critical to sphingosine 1-phosphate (S1P)-mediated endothelial cell (EC) barrier enhancement. Binds to NAA10/ARD1 and PTK2B/PYK2. Mg(2+) is required as a cofactor. Requires Ca(2+) as cofactor. The C-terminus is deglutamylated by AGTPBP1/CCP1, AGBL1/CCP4 and AGBL4/CCP6, leading to the formation of Myosin light chain kinase, smooth muscle, deglutamylated form. The consequences of C-terminal deglutamylation are unknown. Post-translationally, can probably be down-regulated by phosphorylation. Tyrosine phosphorylation by ABL1 increases kinase activity, reverses MLCK-mediated inhibition of Arp2/3-mediated actin polymerization, and enhances CTTN-binding. Phosphorylation by SRC promotes CTTN binding.

The protein resides in the cytoplasm. Its subcellular location is the cell projection. The protein localises to the lamellipodium. It is found in the cleavage furrow. It localises to the cytoskeleton. The protein resides in the stress fiber. It carries out the reaction L-seryl-[myosin light chain] + ATP = O-phospho-L-seryl-[myosin light chain] + ADP + H(+). The enzyme catalyses L-threonyl-[myosin light chain] + ATP = O-phospho-L-threonyl-[myosin light chain] + ADP + H(+). Functionally, calcium/calmodulin-dependent myosin light chain kinase implicated in smooth muscle contraction via phosphorylation of myosin light chains (MLC). Also regulates actin-myosin interaction through a non-kinase activity. Phosphorylates PTK2B/PYK2 and myosin light-chains. Involved in the inflammatory response (e.g. apoptosis, vascular permeability, leukocyte diapedesis), cell motility and morphology, airway hyperreactivity and other activities relevant to asthma. Required for tonic airway smooth muscle contraction that is necessary for physiological and asthmatic airway resistance. Necessary for gastrointestinal motility. Implicated in the regulation of endothelial as well as vascular permeability, probably via the regulation of cytoskeletal rearrangements. In the nervous system it has been shown to control the growth initiation of astrocytic processes in culture and to participate in transmitter release at synapses formed between cultured sympathetic ganglion cells. Critical participant in signaling sequences that result in fibroblast apoptosis. Plays a role in the regulation of epithelial cell survival. Required for epithelial wound healing, especially during actomyosin ring contraction during purse-string wound closure. Mediates RhoA-dependent membrane blebbing. Triggers TRPC5 channel activity in a calcium-dependent signaling, by inducing its subcellular localization at the plasma membrane. Promotes cell migration (including tumor cells) and tumor metastasis. PTK2B/PYK2 activation by phosphorylation mediates ITGB2 activation and is thus essential to trigger neutrophil transmigration during acute lung injury (ALI). May regulate optic nerve head astrocyte migration. Probably involved in mitotic cytoskeletal regulation. Regulates tight junction probably by modulating ZO-1 exchange in the perijunctional actomyosin ring. Mediates burn-induced microvascular barrier injury; triggers endothelial contraction in the development of microvascular hyperpermeability by phosphorylating MLC. Essential for intestinal barrier dysfunction. Mediates Giardia spp.-mediated reduced epithelial barrier function during giardiasis intestinal infection via reorganization of cytoskeletal F-actin and tight junctional ZO-1. Necessary for hypotonicity-induced Ca(2+) entry and subsequent activation of volume-sensitive organic osmolyte/anion channels (VSOAC) in cervical cancer cells. This Bos taurus (Bovine) protein is Myosin light chain kinase, smooth muscle (MYLK).